The chain runs to 555 residues: Probable metabolite transport protein YDR387C (555 aa).

The Cytoplasmic portion of the chain corresponds to 1–39 (MSTDESEDVYSDLYSIISQVTSNTANDIEQLPYALTFKT). A helical transmembrane segment spans residues 40 to 60 (SLIFVGATIGGLLFGYDTGVI). Residues 61-83 (SGVLLSLKPEDLSLVVLTDVQKE) lie on the Extracellular side of the membrane. Residues 84-104 (LITSSTSVGSFFGSILAFPLA) traverse the membrane as a helical segment. Residues 105–118 (DRYGRRITLAICCS) lie on the Cytoplasmic side of the membrane. Residues 119–139 (IFILAAIGMAIARTLTFLICG) form a helical membrane-spanning segment. Residue R140 is a topological domain, extracellular. Residues 141–161 (LLVGIAVGVSAQCVPLFLSEI) traverse the membrane as a helical segment. Residues 162 to 168 (SPSRIRG) are Cytoplasmic-facing. Residues 169–189 (FMLTLNIIAITGGQLVSYVIA) traverse the membrane as a helical segment. Residues 190–200 (SLMKEIDNSWR) are Extracellular-facing. The helical transmembrane segment at 201-221 (YLFALSAIPAILFLSILDFIP) threads the bilayer. The Cytoplasmic segment spans residues 222-356 (ESPRWSISKG…TIRALIVGCM (135 aa)). Residues 289–313 (SSTSGTLSPPNIKRLSSNTERTSNT) are disordered. A helical membrane pass occupies residues 357 to 377 (LMFFQQITGFNAFMYYAAIIF). Residues 378–384 (SKFNIKN) lie on the Extracellular side of the membrane. Residues 385–405 (PLLPPILIASTNFIFTFFAMY) traverse the membrane as a helical segment. The Cytoplasmic portion of the chain corresponds to 406-413 (TMDSLGRR). A helical membrane pass occupies residues 414 to 434 (AILLRTILIMTVGLLLCSVGF). The Extracellular segment spans residues 435 to 440 (GHDQVN). The helical transmembrane segment at 441-461 (LLLISVVIYVAAYASAMGSVP) threads the bilayer. Residues 462-474 (WTCVEFLPLNRRS) lie on the Cytoplasmic side of the membrane. A helical membrane pass occupies residues 475–497 (FGASCIACTNWLTNAFVSMTYLS). At 498–506 (TINTIGDEN) the chain is on the extracellular side. A helical membrane pass occupies residues 507–527 (TMLIFAFFTVCAWFFVYFWYP). At 528 to 555 (EVKGLSLEEVGRVFDNGIDVHYVFRTYH) the chain is on the cytoplasmic side.

This sequence belongs to the major facilitator superfamily. Sugar transporter (TC 2.A.1.1) family.

The protein localises to the membrane. The protein is Probable metabolite transport protein YDR387C of Saccharomyces cerevisiae (strain ATCC 204508 / S288c) (Baker's yeast).